The chain runs to 389 residues: Radial spoke head protein 3 homolog B (389 aa).

The interval 63–106 (PTGQVPGQPDPLELQRQQQARRRALARKRAQEQLKPRTPEPVEG) is disordered. Residues 81-90 (QARRRALARK) are compositionally biased toward basic residues. Residues 91 to 106 (RAQEQLKPRTPEPVEG) show a composition bias toward basic and acidic residues. Residue threonine 143 is modified to Phosphothreonine; by MAPK1. Positions 206–242 (YEEIRNVELAEVQRLEEQERRHREEKERRKKQQWEIV) form a coiled coil. The disordered stretch occupies residues 332-389 (EAMPPGQKTNVINGPNTVTDPSVTTLHTQKPVLDRVSSQPAPSQERKPVEEGGHLMAE). Over residues 338–359 (QKTNVINGPNTVTDPSVTTLHT) the composition is skewed to polar residues. Residues 375 to 389 (QERKPVEEGGHLMAE) show a composition bias toward basic and acidic residues.

The protein belongs to the flagellar radial spoke RSP3 family. In terms of assembly, component of the axonemal radial spoke 1 (RS1) and 2 (RS2) complexes, at least composed of spoke head proteins RSPH1, RSPH3B, RSPH9 and the cilia-specific component RSPH4A or sperm-specific component RSPH6A, spoke stalk proteins RSPH14, DNAJB13, DYDC1, ROPN1L and NME5, and the RS1 complex-specific anchor protein IQUB. Interacts with IQUB. Interacts with phosphorylated MAPK1. Interacts with MEK1. Interacts with PKA regulatory subunits PRKAR1A and PRKAR1B. Interacts with RSPH1. Interacts with RSPH4A. Interacts with RSPH6A. Interacts with RSPH9. Interacts with LRRC23. In terms of tissue distribution, expressed in ependymal cells (at protein level).

Its subcellular location is the cytoplasm. The protein localises to the cytoskeleton. It is found in the cilium axoneme. The protein resides in the flagellum axoneme. Its function is as follows. Functions as part of axonemal radial spoke complexes that play an important part in the motility of sperm and cilia. Functions as a protein kinase A-anchoring protein that scaffolds the cAMP-dependent protein kinase holoenzyme. May serve as a point of convergence for MAPK and PKA signaling in cilia. This chain is Radial spoke head protein 3 homolog B (Rsph3b), found in Mus musculus (Mouse).